Reading from the N-terminus, the 137-residue chain is Protein MesC (137 aa).

This chain is Protein MesC (mesC), found in Leuconostoc mesenteroides.